Here is a 261-residue protein sequence, read N- to C-terminus: tRNA pseudouridine synthase A (261 aa).

The active-site Nucleophile is the Asp-51. Residue Tyr-109 coordinates substrate.

This sequence belongs to the tRNA pseudouridine synthase TruA family. Homodimer.

The catalysed reaction is uridine(38/39/40) in tRNA = pseudouridine(38/39/40) in tRNA. Its function is as follows. Formation of pseudouridine at positions 38, 39 and 40 in the anticodon stem and loop of transfer RNAs. In Shewanella sp. (strain MR-7), this protein is tRNA pseudouridine synthase A.